Consider the following 295-residue polypeptide: Indole-3-glycerol phosphate synthase (295 aa).

Belongs to the TrpC family.

The enzyme catalyses 1-(2-carboxyphenylamino)-1-deoxy-D-ribulose 5-phosphate + H(+) = (1S,2R)-1-C-(indol-3-yl)glycerol 3-phosphate + CO2 + H2O. It functions in the pathway amino-acid biosynthesis; L-tryptophan biosynthesis; L-tryptophan from chorismate: step 4/5. The protein is Indole-3-glycerol phosphate synthase of Prochlorococcus marinus subsp. pastoris (strain CCMP1986 / NIES-2087 / MED4).